The chain runs to 278 residues: Tryptophan synthase alpha chain (278 aa).

Residues Glu-49 and Asp-60 each act as proton acceptor in the active site.

Belongs to the TrpA family. In terms of assembly, tetramer of two alpha and two beta chains.

It catalyses the reaction (1S,2R)-1-C-(indol-3-yl)glycerol 3-phosphate + L-serine = D-glyceraldehyde 3-phosphate + L-tryptophan + H2O. The protein operates within amino-acid biosynthesis; L-tryptophan biosynthesis; L-tryptophan from chorismate: step 5/5. Its function is as follows. The alpha subunit is responsible for the aldol cleavage of indoleglycerol phosphate to indole and glyceraldehyde 3-phosphate. This chain is Tryptophan synthase alpha chain, found in Corynebacterium diphtheriae (strain ATCC 700971 / NCTC 13129 / Biotype gravis).